Reading from the N-terminus, the 334-residue chain is MSAAILSMLGRQSAQPWANGSLLVIHPGGGELSALPNASAWSFHAGHAAYWKAAGRPVFCQIQPPNLSHYDGVLFLVAKEKELNQYLLEQLASLPTGTPVWFAGEKRSGIQPLMKHLPAWLQPPQKLASANHCLLFASERNEQVHQSASIEDYAKNITYELNQQQESFVTLPGVFSREHIDPATLLLLQHIKDLPKGRGMDFACGAGVIAKQLASVATELMACDVSPIAIAASEITLANEPVKTELRLADGIPDNAGQFDFIVSNPPFHTGQRTDYEIAREFISNARQHLNKQGVFRVVANRFLPWPEVIESVFGNCSVIADDGRYRVYHATCR.

This sequence belongs to the methyltransferase superfamily. RsmC family. Monomer.

It is found in the cytoplasm. The catalysed reaction is guanosine(1207) in 16S rRNA + S-adenosyl-L-methionine = N(2)-methylguanosine(1207) in 16S rRNA + S-adenosyl-L-homocysteine + H(+). Specifically methylates the guanine in position 1207 of 16S rRNA in the 30S particle. This Idiomarina loihiensis (strain ATCC BAA-735 / DSM 15497 / L2-TR) protein is Ribosomal RNA small subunit methyltransferase C.